The chain runs to 310 residues: ER-derived vesicles protein ERV29 (310 aa).

Residues 1–108 lie on the Cytoplasmic side of the membrane; the sequence is MSYRGPIGNF…YLNKWKHYPY (108 aa). The tract at residues 11–31 is disordered; sequence GGMPMSSSQGPYSGGAQFRSN. A helical membrane pass occupies residues 109–129; sequence FFVVVFLVVVTVSMLIGASLL. Topologically, residues 130–137 are lumenal; it reads VLRKQTNY. A helical membrane pass occupies residues 138–158; that stretch reads ATGVLCACVISQALVYGLFTG. Residues 159–209 are Cytoplasmic-facing; it reads SSFVLRNFSVIGGLLIAFSDSIVQNKTTFGMLPELNSKNDKAKGYLLFAGR. Residues 210-230 form a helical membrane-spanning segment; that stretch reads ILIVLMFIAFTFSKSWFTVVL. The Lumenal segment spans residues 231–245; it reads TIIGTICFAIGYKTK. A helical transmembrane segment spans residues 246–266; it reads FASIMLGLILTFYNITLNNYW. Over 267–310 the chain is Cytoplasmic; sequence FYNNTKRDFLKYEFYQNLSIIGGLLLVTNTGAGELSVDEKKKIY. Positions 307–310 match the Di-lysine motif motif; sequence KKIY.

Belongs to the SURF4 family.

It localises to the endoplasmic reticulum membrane. In terms of biological role, constituent of COPII-coated endoplasmic reticulum-derived transport vesicles. Required for efficient transport of a subset of secretory proteins to the Golgi. The C-terminal di-lysine motif is required for exit from the endoplasmic reticulum. Required directly for packaging glycosylated pro-alpha-factor into COPII vesicles. Facilitates retrograde transport from the Golgi to the endoplasmic reticulum. This chain is ER-derived vesicles protein ERV29 (ERV29), found in Saccharomyces cerevisiae (strain ATCC 204508 / S288c) (Baker's yeast).